We begin with the raw amino-acid sequence, 240 residues long: Venom hemolysin-like protein 1 (240 aa).

Positions 1–18 (MQYKLILLVVGLFQASLA) are cleaved as a signal peptide. The tract at residues 25-50 (ESVPHPSKDVAPPDTQDSSTQTEVTT) is disordered. Polar residues predominate over residues 39–50 (TQDSSTQTEVTT).

In terms of tissue distribution, expressed by the venom gland (anterior main gland) (at protein level).

The protein localises to the secreted. This chain is Venom hemolysin-like protein 1, found in Platymeris rhadamanthus (Red spot assassin bug).